Reading from the N-terminus, the 252-residue chain is Ubiquinone biosynthesis O-methyltransferase (252 aa).

Residues R45, G76, D97, and M141 each contribute to the S-adenosyl-L-methionine site.

Belongs to the methyltransferase superfamily. UbiG/COQ3 family.

It carries out the reaction a 3-demethylubiquinol + S-adenosyl-L-methionine = a ubiquinol + S-adenosyl-L-homocysteine + H(+). The catalysed reaction is a 3-(all-trans-polyprenyl)benzene-1,2-diol + S-adenosyl-L-methionine = a 2-methoxy-6-(all-trans-polyprenyl)phenol + S-adenosyl-L-homocysteine + H(+). It participates in cofactor biosynthesis; ubiquinone biosynthesis. In terms of biological role, O-methyltransferase that catalyzes the 2 O-methylation steps in the ubiquinone biosynthetic pathway. The sequence is that of Ubiquinone biosynthesis O-methyltransferase from Caulobacter vibrioides (strain ATCC 19089 / CIP 103742 / CB 15) (Caulobacter crescentus).